The primary structure comprises 714 residues: Fatty acid oxidation complex subunit alpha (714 aa).

Positions Met-1 to Pro-190 are enoyl-CoA hydratase. Residues Ala-306–Gln-714 are 3-hydroxyacyl-CoA dehydrogenase.

In the N-terminal section; belongs to the enoyl-CoA hydratase/isomerase family. This sequence in the central section; belongs to the 3-hydroxyacyl-CoA dehydrogenase family. In terms of assembly, heterotetramer of two alpha chains (FadJ) and two beta chains (FadI).

It localises to the cytoplasm. The catalysed reaction is a (3S)-3-hydroxyacyl-CoA = a (2E)-enoyl-CoA + H2O. The enzyme catalyses a 4-saturated-(3S)-3-hydroxyacyl-CoA = a (3E)-enoyl-CoA + H2O. It carries out the reaction a (3S)-3-hydroxyacyl-CoA + NAD(+) = a 3-oxoacyl-CoA + NADH + H(+). It catalyses the reaction (3S)-3-hydroxybutanoyl-CoA = (3R)-3-hydroxybutanoyl-CoA. It functions in the pathway lipid metabolism; fatty acid beta-oxidation. Catalyzes the formation of a hydroxyacyl-CoA by addition of water on enoyl-CoA. Also exhibits 3-hydroxyacyl-CoA epimerase and 3-hydroxyacyl-CoA dehydrogenase activities. The sequence is that of Fatty acid oxidation complex subunit alpha from Escherichia coli (strain 55989 / EAEC).